Consider the following 506-residue polypeptide: Maturase K (506 aa).

This sequence belongs to the intron maturase 2 family. MatK subfamily.

The protein resides in the plastid. Its subcellular location is the chloroplast. Its function is as follows. Usually encoded in the trnK tRNA gene intron. Probably assists in splicing its own and other chloroplast group II introns. The protein is Maturase K of Styphnolobium japonicum (Japanese pagoda tree).